Reading from the N-terminus, the 104-residue chain is Cytochrome c-552 (104 aa).

Residues 1–23 form the signal peptide; that stretch reads MHLHLRGICLVLAVASSSSSALA. Residues Cys-37, Cys-40, His-41, and Met-82 each coordinate heme c.

It belongs to the cytochrome c family. Monoheme monomer. Has the tendency to dimerize. Post-translationally, binds 1 heme c group covalently per subunit.

The protein resides in the periplasm. This is Cytochrome c-552 (cycB) from Bradyrhizobium diazoefficiens (strain JCM 10833 / BCRC 13528 / IAM 13628 / NBRC 14792 / USDA 110).